The sequence spans 277 residues: Ribosome-inactivating protein luffin-alpha (277 aa).

The N-terminal stretch at 1 to 19 (MKRFTVLILAIFVAASTVE) is a signal peptide. Glutamate 179 is an active-site residue.

It belongs to the ribosome-inactivating protein family. Type 1 RIP subfamily.

The enzyme catalyses Endohydrolysis of the N-glycosidic bond at one specific adenosine on the 28S rRNA.. In Luffa aegyptiaca (Sponge gourd), this protein is Ribosome-inactivating protein luffin-alpha.